The sequence spans 444 residues: Sprouty-related, EVH1 domain-containing protein 1 (444 aa).

Serine 2 is modified (N-acetylserine). A WH1 domain is found at 6–123; it reads ATSDNDNSYA…RGIRRAIEDI (118 aa). A disordered region spans residues 123 to 151; that stretch reads ISQGCPESKNEAEGADDLQANEEDSSSSL. Over residues 135–147 the composition is skewed to acidic residues; sequence EGADDLQANEEDS. Residue lysine 224 is modified to N6-methyllysine. One can recognise a KBD domain in the interval 233–285; it reads SIRHVSFQDEDEIVRINPRDILIRRYADYRHPDMWKNDLERDDADSSIQFSKP. A phosphoserine mark is found at serine 238 and serine 308. A required for interaction with TESK1 region spans residues 333-444; that stretch reads SRCVYCQERF…CCGGKHKAAG (112 aa). Positions 334 to 442 constitute an SPR domain; sequence RCVYCQERFN…CGCCGGKHKA (109 aa).

Homodimer and heterodimer. Able to interact with SPRED2 to form heterodimers. Interacts (via C-terminus) with TAOK1/MARKK (via C-terminus); the interaction does not affect TAOK1 kinase activity. Interacts (via C-terminus) with TESK1 (via C-terminus); the interaction inhibits TESK1 kinase activity. Interacts with CAV1. Interacts with RAS. Interacts with palmitoyltransferase ZDHHC17/HIP14; the interaction leads to palmitoylation of SPRED1. Post-translationally, palmitoylated by ZDHHC17/HIP14. In terms of processing, phosphorylated on tyrosine. Ubiquitinated. In terms of tissue distribution, weakly expressed in embryonic cell line HEK293.

Its subcellular location is the cell membrane. The protein localises to the membrane. It localises to the caveola. It is found in the nucleus. Functionally, tyrosine kinase substrate that inhibits growth-factor-mediated activation of MAP kinase. Negatively regulates hematopoiesis of bone marrow. Inhibits fibroblast growth factor (FGF)-induced retinal lens fiber differentiation, probably by inhibiting FGF-mediated phosphorylation of ERK1/2. Attenuates actin stress fiber formation via inhibition of TESK1-mediated phosphorylation of cofilin. Inhibits TGFB-induced epithelial-to-mesenchymal transition in lens epithelial cells. The chain is Sprouty-related, EVH1 domain-containing protein 1 (SPRED1) from Homo sapiens (Human).